The chain runs to 244 residues: Mediator of RNA polymerase II transcription subunit 8 (244 aa).

A coiled-coil region spans residues 6 to 30 (QEQLKTLEQSRQRLVQLTRSLASLI).

The protein belongs to the Mediator complex subunit 8 family. As to quaternary structure, component of the Mediator complex.

The protein localises to the nucleus. Component of the Mediator complex, a coactivator involved in the regulated transcription of nearly all RNA polymerase II-dependent genes. Mediator functions as a bridge to convey information from gene-specific regulatory proteins to the basal RNA polymerase II transcription machinery. Mediator is recruited to promoters by direct interactions with regulatory proteins and serves as a scaffold for the assembly of a functional preinitiation complex with RNA polymerase II and the general transcription factors. In Aspergillus oryzae (strain ATCC 42149 / RIB 40) (Yellow koji mold), this protein is Mediator of RNA polymerase II transcription subunit 8 (med8).